A 174-amino-acid chain; its full sequence is Crossover junction endodeoxyribonuclease RuvC (174 aa).

Residues aspartate 8, glutamate 67, and aspartate 139 contribute to the active site. Positions 8, 67, and 139 each coordinate Mg(2+).

Belongs to the RuvC family. In terms of assembly, homodimer which binds Holliday junction (HJ) DNA. The HJ becomes 2-fold symmetrical on binding to RuvC with unstacked arms; it has a different conformation from HJ DNA in complex with RuvA. In the full resolvosome a probable DNA-RuvA(4)-RuvB(12)-RuvC(2) complex forms which resolves the HJ. The cofactor is Mg(2+).

The protein resides in the cytoplasm. The catalysed reaction is Endonucleolytic cleavage at a junction such as a reciprocal single-stranded crossover between two homologous DNA duplexes (Holliday junction).. The RuvA-RuvB-RuvC complex processes Holliday junction (HJ) DNA during genetic recombination and DNA repair. Endonuclease that resolves HJ intermediates. Cleaves cruciform DNA by making single-stranded nicks across the HJ at symmetrical positions within the homologous arms, yielding a 5'-phosphate and a 3'-hydroxyl group; requires a central core of homology in the junction. The consensus cleavage sequence is 5'-(A/T)TT(C/G)-3'. Cleavage occurs on the 3'-side of the TT dinucleotide at the point of strand exchange. HJ branch migration catalyzed by RuvA-RuvB allows RuvC to scan DNA until it finds its consensus sequence, where it cleaves and resolves the cruciform DNA. The polypeptide is Crossover junction endodeoxyribonuclease RuvC (Pseudomonas fluorescens (strain SBW25)).